The sequence spans 520 residues: Cell adhesion molecule CEACAM2 (520 aa).

Positions 1 to 34 (MELASAHLHKGQVPWFGLLLTASLLASWSPPTTA) are cleaved as a signal peptide. Residues 35-141 (QVTVMAFPLH…RVLTGQFHVH (107 aa)) form the Ig-like V-type domain. The Extracellular portion of the chain corresponds to 35-422 (QVTVMAFPLH…IFDSTYDISD (388 aa)). Residues N87, N104, N148, N152, N175, N199, N206, N210, N226, N258, N290, N294, N304, N317, N333, and N361 are each glycosylated (N-linked (GlcNAc...) asparagine). Ig-like C2-type domains lie at 145–234 (LKSN…FSLN), 239–319 (PDTP…KNIT), and 327–411 (PSLQ…IKLE). Cysteines 167 and 217 form a disulfide. A disulfide bridge connects residues C261 and C301. C346 and C394 are disulfide-bonded. A helical membrane pass occupies residues 423-443 (VPIAVIITGAVAGVILIAGLA). The Cytoplasmic segment spans residues 444 to 520 (YRLCSRKSRW…ETVYSEVKKK (77 aa)). The disordered stretch occupies residues 457–520 (QRDLTEHKPS…ETVYSEVKKK (64 aa)). Residues 466-480 (SASNHNLAPSDNSPN) are compositionally biased toward polar residues. Phosphotyrosine is present on Y487. Residues 490 to 513 (LNFNSQQPNRPTSAPSSPRATETV) are compositionally biased toward polar residues. S502 carries the post-translational modification Phosphoserine. Y514 is modified (phosphotyrosine).

Belongs to the immunoglobulin superfamily. CEA family. Interacts weakly with MHV spike protein in tissue culture. Isoform 2 is detected in elongating spermatids within the seminiferous epithelium (at protein level). Expressed in kidney, colon, uterus, gut mononuclear cells, crypt epithelia of intestinal tissues, and to a lesser extent, in spleen. Expressed in brain including VMH, globus pallidus, ventral pallidum, striatum, olfactory bulb and hippocampus. Also detected in rectal carcinoma cell line CMT93. Isoform 2 and isoform 3 are expressed in testis. Isoform 2 is detected in seminiferous tubule, not detected in epididymal spermatozoa. Also not observed on spermatogonia, spermatocytes, round spermatids or somatic Sertoli cells. During stages I-VII of spermatogenesis, detected on the elongating spermatids. At spermiation (stage VIII) and subsequent stages IX-XII, levels are drastically reduced or absent in the seminiferous tubules. Sometimes weakly detected in the apical region of stage-VIII seminiferous epithelium. Isoform 2 level is very low in stomach, kidney, intestine, liver and spleen.

It is found in the cell membrane. Controls energy balance and peripheral insulin action. Involved in the regulation of feeding behavior particularly in the ventromedial nucleus of hypothalamus (VMH) regulation of food intake. Has a role in the regulation of metabolic rate and insulin sensitivity or resistance via effects on brown adipogenesis, sympathetic nervous outflow to brown adipose tissue, spontaneous activity and energy expenditure in skeletal muscle. In case of murine coronavirus (MHV) infection, does probably not serve as functional receptor for the virus. Its function is as follows. Isoform 2 may be an adhesion molecule contributing to cell to cell adhesion between elongating spermatids and Sertoli cells within the seminiferous epithelium. The polypeptide is Cell adhesion molecule CEACAM2 (Mus musculus (Mouse)).